We begin with the raw amino-acid sequence, 239 residues long: Derlin-2 (239 aa).

Over 1–57 the chain is Cytoplasmic; the sequence is MAYQSLRLEYLQIPPVSRAYTTACVLTTAAVQLELITPFQLYFNPELIFKHFQIWRL. Residues 58 to 78 traverse the membrane as a helical segment; sequence ITNFLFFGPVGFNFLFNMIFL. The Lumenal portion of the chain corresponds to 79–96; that stretch reads YRYCRMLEEGSFRGRTAD. A helical transmembrane segment spans residues 97–117; the sequence is FVFMFLFGGFLMTLFGLFVSL. Topologically, residues 118–150 are cytoplasmic; that stretch reads VFLGQAFTIMLVYVWSRRNPYVRMNFFGLLNFQ. A helical membrane pass occupies residues 151–171; sequence APFLPWVLMGFSLLLGNSIIV. A topological domain (lumenal) is located at residue Asp172. Residues 173–193 traverse the membrane as a helical segment; the sequence is LLGIAVGHIYFFLEDIFPNQP. The Cytoplasmic portion of the chain corresponds to 194 to 239; it reads GGIRILKTPSILRTIFDTPDEDPNYNPLPEERPGGFAWGEGQRLGG. Residues 214–239 are disordered; it reads EDPNYNPLPEERPGGFAWGEGQRLGG. Residues 229–239 show a composition bias toward gly residues; it reads FAWGEGQRLGG.

This sequence belongs to the derlin family. In terms of assembly, forms homo- and heterooligomers with DERL3 and, to a lesser extent, with DERL1. Interacts with the SEL1L/SYVN1 and VCP/SELENOS protein complexes. Mediates association between VCP and EDEM1, as well as that between VCP and the misfolded glycoproteins. Interacts with OS9. Interacts with SELENOK and SELENOS. Interacts with the signal recognition particle/SRP and the SRP receptor; in the process of endoplasmic reticulum stress-induced pre-emptive quality control. Interacts with CCDC47. As to expression, widely expressed, with lowest levels in brain and heart.

It is found in the endoplasmic reticulum membrane. In terms of biological role, functional component of endoplasmic reticulum-associated degradation (ERAD) for misfolded lumenal glycoproteins, but not that of misfolded nonglycoproteins. May act by forming a channel that allows the retrotranslocation of misfolded glycoproteins into the cytosol where they are ubiquitinated and degraded by the proteasome. May mediate the interaction between VCP and misfolded glycoproteins. May also be involved in endoplasmic reticulum stress-induced pre-emptive quality control, a mechanism that selectively attenuates the translocation of newly synthesized proteins into the endoplasmic reticulum and reroutes them to the cytosol for proteasomal degradation. The protein is Derlin-2 of Mus musculus (Mouse).